The following is a 123-amino-acid chain: Small ribosomal subunit protein uS12 (123 aa).

Residue Asp-89 is modified to 3-methylthioaspartic acid. The disordered stretch occupies residues 104 to 123 (TQGVKDRRQRRSKYGAKRPK). Basic residues predominate over residues 110–123 (RRQRRSKYGAKRPK).

This sequence belongs to the universal ribosomal protein uS12 family. As to quaternary structure, part of the 30S ribosomal subunit. Contacts proteins S8 and S17. May interact with IF1 in the 30S initiation complex.

Its function is as follows. With S4 and S5 plays an important role in translational accuracy. Interacts with and stabilizes bases of the 16S rRNA that are involved in tRNA selection in the A site and with the mRNA backbone. Located at the interface of the 30S and 50S subunits, it traverses the body of the 30S subunit contacting proteins on the other side and probably holding the rRNA structure together. The combined cluster of proteins S8, S12 and S17 appears to hold together the shoulder and platform of the 30S subunit. The sequence is that of Small ribosomal subunit protein uS12 from Rhodospirillum rubrum (strain ATCC 11170 / ATH 1.1.1 / DSM 467 / LMG 4362 / NCIMB 8255 / S1).